Consider the following 80-residue polypeptide: U20-ctenitoxin-Pn1a (80 aa).

7 cysteine pairs are disulfide-bonded: C3/C20, C10/C26, C17/C52, C19/C40, C28/C38, C58/C71, and C75/C80.

In terms of tissue distribution, expressed by the venom gland.

Its subcellular location is the secreted. Its function is as follows. Omega-agatoxin are antagonists of voltage-gated calcium channels (Cav). Induces rapid general flaccid paralysis followed by death when injected into the cerebral ventricle of mice at dose levels of 3 ug per mouse. The sequence is that of U20-ctenitoxin-Pn1a from Phoneutria nigriventer (Brazilian armed spider).